A 370-amino-acid chain; its full sequence is Dihydroorotate dehydrogenase (370 aa).

Residues K82, N135–M139, and N200 contribute to the substrate site. K82–T83 serves as a coordination point for FMN. Residue N200 participates in FMN binding. The active-site Nucleophile is the C203. FMN is bound by residues K241 and I269. N270 to T271 contacts substrate. Residues G297, G328–G329, and A350–T351 each bind FMN.

It belongs to the dihydroorotate dehydrogenase family. The cofactor is FMN.

The enzyme catalyses (S)-dihydroorotate + A = orotate + AH2. It functions in the pathway pyrimidine metabolism; UMP biosynthesis via de novo pathway. In terms of biological role, catalyzes the conversion of dihydroorotate to orotate. Participates in the pyrimidine biosynthetic pathway. The polypeptide is Dihydroorotate dehydrogenase (pyr4) (Dictyostelium discoideum (Social amoeba)).